The following is a 321-amino-acid chain: Mechanosensory protein 3 (321 aa).

2 consecutive LIM zinc-binding domains span residues 27-86 (NKCN…DHSI) and 87-152 (HRCA…QMDD). The homeobox DNA-binding region spans 217–276 (RRGPRTTIKQNQLDVLNEMFSNTPKPSKHARAKLALETGLSMRVIQVWFQNRRSKERRLK).

In terms of assembly, interacts with unc-86; the heterooligomer binds to the promoters of mec-3, mec-4 and mec-7. Expressed in the mechanosensory neurons ALML, ALMR, PLML, PLMR, AVM and PVM, and the FLPL and FLPR neurons.

The protein localises to the nucleus. Its function is as follows. Transcription factor. Specifies differentiation of the set of six touch receptor neurons (TRNs). May positively modulate expression of both its own gene and also of homeobox ARX homolog alr-1 in TRNs, forming a positive feedback loop with alr-1, thereby restricting the variability of expression of mec-3. Required to determine the identity of ALM sensory neurons, acting by interacting with unc-86, thereby preventing unc-86 cooperating with pag-3 to induce BDU-neuron specific genes. Binds cooperatively as a heterodimer with unc-86 to sites in the mec-3 gene promoter. Promotes outgrowth of lateral dendritic branches on the PVD nociceptive neurons, probably acting both directly, and upstream of zinc finger protein egl-46. The protein is Mechanosensory protein 3 (mec-3) of Caenorhabditis elegans.